The chain runs to 545 residues: Chaperonin GroEL (545 aa).

ATP is bound by residues 29-32 (TMGP), K50, 86-90 (DGTTT), G414, 477-479 (DAA), and D493.

The protein belongs to the chaperonin (HSP60) family. Forms a cylinder of 14 subunits composed of two heptameric rings stacked back-to-back. Interacts with the co-chaperonin GroES.

The protein resides in the cytoplasm. It carries out the reaction ATP + H2O + a folded polypeptide = ADP + phosphate + an unfolded polypeptide.. Together with its co-chaperonin GroES, plays an essential role in assisting protein folding. The GroEL-GroES system forms a nano-cage that allows encapsulation of the non-native substrate proteins and provides a physical environment optimized to promote and accelerate protein folding. The polypeptide is Chaperonin GroEL (Campylobacter jejuni subsp. jejuni serotype O:2 (strain ATCC 700819 / NCTC 11168)).